The following is a 134-amino-acid chain: Fluoride-specific ion channel FluC 3 (134 aa).

4 helical membrane-spanning segments follow: residues 4 to 24 (LIIL…FIML), 35 to 55 (MDIF…TSFF), 67 to 87 (MVGT…FGAV), and 100 to 120 (ICYL…GLMI). Residues glycine 74 and serine 77 each contribute to the Na(+) site.

It belongs to the fluoride channel Fluc/FEX (TC 1.A.43) family.

It localises to the cell inner membrane. The catalysed reaction is fluoride(in) = fluoride(out). Na(+) is not transported, but it plays an essential structural role and its presence is essential for fluoride channel function. Functionally, fluoride-specific ion channel. Important for reducing fluoride concentration in the cell, thus reducing its toxicity. The sequence is that of Fluoride-specific ion channel FluC 3 from Yersinia pseudotuberculosis serotype I (strain IP32953).